Reading from the N-terminus, the 459-residue chain is Mitochondrial distribution and morphology protein 10 (459 aa).

The protein belongs to the MDM10 family. Component of the ER-mitochondria encounter structure (ERMES) or MDM complex, composed of MMM1, MDM10, MDM12 and MDM34. Associates with the mitochondrial outer membrane sorting assembly machinery SAM(core) complex.

It localises to the mitochondrion outer membrane. Its function is as follows. Component of the ERMES/MDM complex, which serves as a molecular tether to connect the endoplasmic reticulum and mitochondria. Components of this complex are involved in the control of mitochondrial shape and protein biogenesis and may function in phospholipid exchange. MDM10 is involved in the late assembly steps of the general translocase of the mitochondrial outer membrane (TOM complex). Functions in the TOM40-specific route of the assembly of outer membrane beta-barrel proteins, including the association of TOM40 with the receptor TOM22 and small TOM proteins. Can associate with the SAM(core) complex as well as the MDM12-MMM1 complex, both involved in late steps of the major beta-barrel assembly pathway, that is responsible for biogenesis of all outer membrane beta-barrel proteins. May act as a switch that shuttles between both complexes and channels precursor proteins into the TOM40-specific pathway. Plays a role in mitochondrial morphology and in the inheritance of mitochondria. The chain is Mitochondrial distribution and morphology protein 10 from Clavispora lusitaniae (strain ATCC 42720) (Yeast).